The chain runs to 408 residues: MGALTIVAKYMIVAQIEVNGSVDKSDIIGALFSQTEGLLGKDMDLRELQMMGRIGRIEVDIFEKNGKTKAKIHIPSNLDRYETALVAALIESIERVGPYPAAVKVVEIRDLREEKRKKIIEKAKELVKLIEEEILPDTKEIIEKLKEDVAKAEIIEYGPERLPAGPDVDKSDSIIIVEGRADVVNLVKHGYRNVIALEGISRGVPQTIIELSKKKNVTVFIDGDKGGELVLRELLKVAHVDYIARAPPGKEVEQLTAKEIAKALRNKITLEEWLAQQKAAGEKAETPQQPPPQQPVPQQEVREEAQKPAFPFDITKKIDEMLGTLEAEIYDENWTLVKRLPVRELPDFLTTSGDSIYAIILDGITTQRIVDLAAKKGVKIIVTARTGPLTKVPENMQILTFDQLKKVE.

One can recognise a Toprim domain in the interval 172-248; the sequence is DSIIIVEGRA…HVDYIARAPP (77 aa). The Mg(2+) site is built by glutamate 178, aspartate 222, and aspartate 224. Positions 279–304 are disordered; it reads AAGEKAETPQQPPPQQPVPQQEVREE.

This sequence belongs to the archaeal DnaG primase family. As to quaternary structure, forms a ternary complex with MCM helicase and DNA. Component of the archaeal exosome complex. It depends on Mg(2+) as a cofactor.

It carries out the reaction ssDNA + n NTP = ssDNA/pppN(pN)n-1 hybrid + (n-1) diphosphate.. In terms of biological role, RNA polymerase that catalyzes the synthesis of short RNA molecules used as primers for DNA polymerase during DNA replication. Also part of the exosome, which is a complex involved in RNA degradation. Acts as a poly(A)-binding protein that enhances the interaction between heteromeric, adenine-rich transcripts and the exosome. The sequence is that of DNA primase DnaG from Pyrobaculum aerophilum (strain ATCC 51768 / DSM 7523 / JCM 9630 / CIP 104966 / NBRC 100827 / IM2).